The sequence spans 69 residues: Probable molybdenum-pterin-binding protein (69 aa).

Residues 2–68 (KISARNQLKG…IKATSVMVGV (67 aa)) form the Mop domain.

To C.pasteurianum MOP proteins.

Its function is as follows. Binds one mole of molybdenum per mole of protein and contains a pterin. This chain is Probable molybdenum-pterin-binding protein, found in Haemophilus influenzae (strain ATCC 51907 / DSM 11121 / KW20 / Rd).